A 571-amino-acid chain; its full sequence is MSGDILVGEYLFKRLEQLGVKSILGVPGDFNLALLDLIEKVGDEKFRWVGNTNELNGAYAADGYARVNGLSAIVTTFGVGELSAINGVAGSYAEHVPVVHIVGMPSTKVQDTGALLHHTLGDGDFRTFMDMFKKVSAYSIMIDNGNDAAEKIDEALSICYKKARPVYIGIPSDAGYFKASSSNLGKRLKLEEDTNDPAVEQEVINHISEMVVNAKKPVILIDACAVRHRVVPEVHELIKLTHFPTYVTPMGKSAIDETSQFFDGVYVGSISDPEVKDRIESTDLLLSIGALKSDFNTGSFSYHLSQKNAVEFHSDHMRIRYALYPNVAMKYILRKLLKVLDASMCHSKAAPTIGYNIKPKHAEGYSSNEITHCWFWPKFSEFLKPRDVLITETGTANFGVLDCRFPKDVTAISQVLWGSIGYSVGAMFGAVLAVHDSKEPDRRTILVVGDGSLQLTITEISTCIRHNLKPIIFIINNDGYTIERLIHGLHASYNEINTKWGYQQIPKFFGAAENHFRTYCVKTPTDVEKLFSDKEFANADVIQVVELVMPMLDAPRVLVEQAKLTSKINKQ.

Asp29 and His118 together coordinate pyruvate. Residues Thr395 and 418–420 (GSI) contribute to the thiamine diphosphate site. A Mg(2+)-binding site is contributed by Asp450. Thiamine diphosphate-binding positions include 451 to 452 (GS) and 477 to 482 (NDGYTI). Residues Asn477 and Gly479 each coordinate Mg(2+). Glu483 is a pyruvate binding site.

The protein belongs to the TPP enzyme family. Homotetramer. Requires Mg(2+) as cofactor. It depends on thiamine diphosphate as a cofactor.

It catalyses the reaction a 2-oxocarboxylate + H(+) = an aldehyde + CO2. The catalysed reaction is pyruvate + H(+) = acetaldehyde + CO2. In Schizosaccharomyces pombe (strain 972 / ATCC 24843) (Fission yeast), this protein is Putative pyruvate decarboxylase C13A11.06.